Here is a 243-residue protein sequence, read N- to C-terminus: Probable transcriptional regulatory protein LCABL_11860 (243 aa).

Positions 1-23 (MSGHSKWHNIQGRKNAQDSKRGK) are disordered.

It belongs to the TACO1 family.

It localises to the cytoplasm. In Lacticaseibacillus casei (strain BL23) (Lactobacillus casei), this protein is Probable transcriptional regulatory protein LCABL_11860.